The sequence spans 635 residues: Chaperone protein HtpG (635 aa).

An a; substrate-binding region spans residues 1–346 (MSQTTTNSAS…SADLPLNVSR (346 aa)). A b region spans residues 347–563 (EILQESRDVR…QNELSPHLLR (217 aa)). Residues 564–635 (MLKAAGQEAP…KRLNGLLLKA (72 aa)) are c.

The protein belongs to the heat shock protein 90 family. Homodimer.

Its subcellular location is the cytoplasm. In terms of biological role, molecular chaperone. Has ATPase activity. The sequence is that of Chaperone protein HtpG from Bordetella parapertussis (strain 12822 / ATCC BAA-587 / NCTC 13253).